Consider the following 428-residue polypeptide: Adenylosuccinate synthetase (428 aa).

Residues 12-18 and 40-42 contribute to the GTP site; these read GDEGKGK and GHT. Asp13 acts as the Proton acceptor in catalysis. Mg(2+) contacts are provided by Asp13 and Gly40. IMP is bound by residues 13-16, 38-41, Thr129, Arg143, Gln224, Thr239, and Arg303; these read DEGK and NAGH. The Proton donor role is filled by His41. 299–305 contributes to the substrate binding site; sequence VTTGRIR. GTP contacts are provided by residues Arg305, 331–333, and 410–412; these read KVD and AYG.

It belongs to the adenylosuccinate synthetase family. As to quaternary structure, homodimer. Mg(2+) serves as cofactor.

It is found in the cytoplasm. The catalysed reaction is IMP + L-aspartate + GTP = N(6)-(1,2-dicarboxyethyl)-AMP + GDP + phosphate + 2 H(+). It functions in the pathway purine metabolism; AMP biosynthesis via de novo pathway; AMP from IMP: step 1/2. Plays an important role in the de novo pathway of purine nucleotide biosynthesis. Catalyzes the first committed step in the biosynthesis of AMP from IMP. The polypeptide is Adenylosuccinate synthetase (Francisella tularensis subsp. novicida (strain U112)).